A 384-amino-acid polypeptide reads, in one-letter code: S-adenosylmethionine synthase (384 aa).

His15 lines the ATP pocket. Asp17 contacts Mg(2+). Glu43 lines the K(+) pocket. Residues Glu56 and Gln99 each contribute to the L-methionine site. A flexible loop region spans residues 99 to 109 (QSPDINQGVDK). Residues 164 to 166 (DAK), 230 to 231 (RF), Asp239, 245 to 246 (RK), Ala262, and Lys266 contribute to the ATP site. Residue Asp239 coordinates L-methionine. Lys270 lines the L-methionine pocket.

Belongs to the AdoMet synthase family. Homotetramer; dimer of dimers. Mg(2+) is required as a cofactor. It depends on K(+) as a cofactor.

The protein resides in the cytoplasm. It catalyses the reaction L-methionine + ATP + H2O = S-adenosyl-L-methionine + phosphate + diphosphate. It functions in the pathway amino-acid biosynthesis; S-adenosyl-L-methionine biosynthesis; S-adenosyl-L-methionine from L-methionine: step 1/1. Catalyzes the formation of S-adenosylmethionine (AdoMet) from methionine and ATP. The overall synthetic reaction is composed of two sequential steps, AdoMet formation and the subsequent tripolyphosphate hydrolysis which occurs prior to release of AdoMet from the enzyme. This is S-adenosylmethionine synthase from Aliivibrio fischeri (strain ATCC 700601 / ES114) (Vibrio fischeri).